The sequence spans 191 residues: MEYFDMRKMSVNLWRNAAGETREICTFPPAKRDFYWRASIASIAANGEFSLFPGMERIVTLLEGGEMFLESADRFNHTLKPLQPFAFAADQVVKAKLTAGQMSMDFNIMTRLDVCKAKVRIAERTFTTFGSRGGVVFVINGAWQLGDKLLTTDQGACWFDGRHTLRLLQPQGKLLFSEINWLAGYSPDQVQ.

It belongs to the Ves family.

This chain is Protein Ves, found in Escherichia coli O127:H6 (strain E2348/69 / EPEC).